A 410-amino-acid polypeptide reads, in one-letter code: Sensor histidine kinase GlnK (410 aa).

At Met1–Pro15 the chain is on the extracellular side. The helical transmembrane segment at Leu16–Leu36 threads the bilayer. Residues Arg37 to His38 lie on the Cytoplasmic side of the membrane. A helical membrane pass occupies residues Val39–Leu59. At Glu60–Pro71 the chain is on the extracellular side. The chain crosses the membrane as a helical span at residues Ile72–Ile92. The Cytoplasmic portion of the chain corresponds to Leu93–Pro102. A helical membrane pass occupies residues Ile103 to Val123. Topologically, residues Gln124–Asp139 are extracellular. A helical membrane pass occupies residues Ile140 to Leu160. Over Tyr161–Gly410 the chain is Cytoplasmic. The 217-residue stretch at Val189 to His405 folds into the Histidine kinase domain. His190 is subject to Phosphohistidine; by autocatalysis.

In terms of assembly, homotrimer. Under poor nitrogen source such as nitrate, the complex between GlnK and AmtB, which are the transmembrane ammonium transporter and its cognate regulator, respectively, interacts with TnrA. GlnK-ATP complex are not able to bind TnrA.

The protein localises to the cell membrane. The catalysed reaction is ATP + protein L-histidine = ADP + protein N-phospho-L-histidine.. Member of the two-component regulatory system GlnK/GlnL that positively regulates the expression of the glsA-glnT operon in response to glutamine. It seems that autophosphorylated GlnK transfers a phosphoryl group to GlnL, which positively regulates the expression of the glsA-glnT operon. Interaction between GlnK-AmtB complex and TnrA protects TnrA from proteolytic degradation. This is Sensor histidine kinase GlnK from Bacillus subtilis (strain 168).